A 942-amino-acid polypeptide reads, in one-letter code: Protein ZDS2 (942 aa).

The segment at 1–28 is disordered; sequence MVLMEDMQNKDGHNTVENSSGGTDSNNN. Polar residues predominate over residues 15-28; that stretch reads TVENSSGGTDSNNN. At S50 the chain carries Phosphoserine. Disordered regions lie at residues 91–142, 483–541, 617–654, 682–728, and 788–817; these read SRNS…DDSI, SQES…NSSN, VVSS…KNSL, VKKE…DIDT, and SRDT…ISTL. Basic and acidic residues predominate over residues 99-122; that stretch reads SSKESLQESLHEENIIRSEQKEEQ. The span at 123–134 shows a compositional bias: acidic residues; the sequence is GSEDNDAYEEGD. 3 stretches are compositionally biased toward low complexity: residues 483 to 497, 518 to 541, and 617 to 627; these read SQES…SNNS, SSSE…NSSN, and VVSSSESQPSK. Residues 682 to 704 show a composition bias toward basic residues; sequence VKKELKKKASHSSLSKFRKSPKK. Residues 807–816 show a composition bias toward polar residues; that stretch reads TSPTAPQIST.

To yeast ZDS1/NRC1/CES1. Interacts with SKG6.

Functionally, acts as a negative regulator of polarized growth via an alternative mechanism to ZDS1. In heat-stressed cells appears to play a role in localizing BCY1 to the cytoplasm. Seems to interact with, and down-regulate, CDC42. Also acts as a suppressor of PKC1. May act as an integration point for distinct signaling pathways helping to maintain a balance among these different pathways. This chain is Protein ZDS2 (ZDS2), found in Saccharomyces cerevisiae (strain ATCC 204508 / S288c) (Baker's yeast).